A 249-amino-acid chain; its full sequence is Putative nicotinamide mononucleotide adenylyltransferase (249 aa).

Residues Ser40 and Phe41 each contribute to the NAD(+) site. An ATP-binding site is contributed by His48. Residues Thr97, Gly129, Asp131, Arg165, and Asn206 each contribute to the NAD(+) site. ATP is bound at residue 214–217 (TRAR).

It belongs to the eukaryotic NMN adenylyltransferase family. POF1 subfamily.

It localises to the cytoplasm. Its subcellular location is the nucleus. The enzyme catalyses beta-nicotinamide D-ribonucleotide + ATP + H(+) = diphosphate + NAD(+). The protein operates within cofactor biosynthesis; NAD(+) biosynthesis; NAD(+) from nicotinamide D-ribonucleotide: step 1/1. Its function is as follows. Catalyzes the formation of NAD(+) from nicotinamide mononucleotide (NMN) and ATP. Involved in the salvage pathway for NAD(+) biosynthesis via NMN. The polypeptide is Putative nicotinamide mononucleotide adenylyltransferase (Schizosaccharomyces pombe (strain 972 / ATCC 24843) (Fission yeast)).